A 247-amino-acid polypeptide reads, in one-letter code: Chloride intracellular channel protein 2 (247 aa).

Positions 1-94 are N-terminal; it reads MSGLRPGTQV…KIEEFLEQTL (94 aa). The tract at residues 1 to 96 is required for insertion into the membrane; sequence MSGLRPGTQV…EEFLEQTLAP (96 aa). Residue E25 coordinates glutathione. The G-site signature appears at 30 to 33; sequence CPFC. Cysteines 30 and 33 form a disulfide. Residues 32–52 traverse the membrane as a helical segment; sequence FCQRLFMILWLKGVKFNVTTV. A GST C-terminal domain is found at 76–239; it reads NKELKTDFIK…PEDKEIENTY (164 aa). Residues 95–106 are joint loop; sequence APPRYPHLSPKY. The C-terminal stretch occupies residues 107–247; the sequence is KESFDVGCNL…TYANVAKQKS (141 aa). The tract at residues 151–171 is foot loop; that stretch reads NTPLLDEIDPDSAEEPPVSRR. H227 lines the glutathione pocket.

It belongs to the chloride channel CLIC family. In terms of assembly, monomer. Interacts with TRAPPC2 and RYR2. Expressed in adult and fetal brain, heart, skeletal muscle, liver, lung, and spleen. Detected in adult stomach and testis. Expressed in fetal thymus and kidney.

It is found in the cytoplasm. It localises to the membrane. It carries out the reaction chloride(in) = chloride(out). The enzyme catalyses tert-butyl hydroperoxide + 2 glutathione = tert-butanol + glutathione disulfide + H2O. It catalyses the reaction cumene hydroperoxide + 2 glutathione = 2-phenylpropan-2-ol + glutathione disulfide + H2O. With respect to regulation, the channel conductance is regulated by pH. In terms of biological role, in the soluble state, catalyzes glutaredoxin-like thiol disulfide exchange reactions with reduced glutathione as electron donor. Displays weak glutathione peroxidase activity. Can insert into membranes and form chloride ion channels. Membrane insertion seems to be redox-regulated and may occur only under oxidizing conditions. Modulates the activity of RYR2 and inhibits calcium influx. This is Chloride intracellular channel protein 2 from Homo sapiens (Human).